Reading from the N-terminus, the 248-residue chain is Small ribosomal subunit protein uS3 (248 aa).

Positions 38-106 (IREFLSKGLD…QVALNILEVK (69 aa)) constitute a KH type-2 domain. Residues 214-230 (SEINAPAERRGRGDRNA) are compositionally biased toward basic and acidic residues. The interval 214–248 (SEINAPAERRGRGDRNARPRRGGQRRQRAEQKQEG) is disordered.

The protein belongs to the universal ribosomal protein uS3 family. As to quaternary structure, part of the 30S ribosomal subunit. Forms a tight complex with proteins S10 and S14.

Binds the lower part of the 30S subunit head. Binds mRNA in the 70S ribosome, positioning it for translation. This Corynebacterium glutamicum (strain R) protein is Small ribosomal subunit protein uS3.